The sequence spans 432 residues: G-protein coupled receptor 22 (432 aa).

The Cytoplasmic segment spans residues 1–45 (MCFSPVLEINMQSESNVTVRDDIEDIDTNMYQPLSYPLSFQVSLT). A helical membrane pass occupies residues 46-66 (GFLMLEIVLGLGSNLTVLVLY). The Extracellular segment spans residues 67-85 (CMKSNLISSVSNIITMNLH). Residues 86–106 (VLDVIICVGCIPLTIVILLLS) form a helical membrane-spanning segment. Residues 107 to 115 (LERNTALIC) are Cytoplasmic-facing. Residues 116-136 (CFHEACVSFASVSTAINVFAI) form a helical membrane-spanning segment. Residues 137-156 (TLDRYDISVKPANRILTMGR) are Extracellular-facing. The chain crosses the membrane as a helical span at residues 157–177 (AVMLMTSIWIFSFFSFLIPFI). Residues 178–208 (EVNFFSLQSGNAWENKTLLCVSTSEYYTELG) are Cytoplasmic-facing. The chain crosses the membrane as a helical span at residues 209-229 (MYYHLLVQIPIFFFTVIVMLI). The Extracellular segment spans residues 230–314 (TYTKILQALN…ERQKRVFKMS (85 aa)). A helical transmembrane segment spans residues 315-335 (LLIISTFLLCWTPISVLNTTI). Residues 336-348 (LCLGPSDLLVKLR) are Cytoplasmic-facing. Residues 349–369 (LCFLVMAYGTTIFHPLLYAFT) form a helical membrane-spanning segment. Residues 370 to 432 (RQKFQKVLKS…KCLVPQVVTD (63 aa)) are Extracellular-facing.

It belongs to the G-protein coupled receptor 1 family. As to expression, abundant levels detected in the brain. High expression in the heart (at protein level). No detectable expression in other peripheral tissues.

It localises to the cell membrane. In terms of biological role, orphan G-protein coupled receptor. Seems to act through a G(i)/G(o) mediated pathway. May be involved in ciliogenesis. This is G-protein coupled receptor 22 from Rattus norvegicus (Rat).